A 145-amino-acid chain; its full sequence is uncharacterized protein (145 aa).

A dksA C4-type zinc finger spans residues 86–110 (CERCGEEIPEPRLCAIPWTRYCAKC).

This is an uncharacterized protein from Aquifex aeolicus (strain VF5).